The sequence spans 400 residues: Nicotinate phosphoribosyltransferase (400 aa).

Position 220 is a phosphohistidine; by autocatalysis (His220).

Belongs to the NAPRTase family. Transiently phosphorylated on a His residue during the reaction cycle. Phosphorylation strongly increases the affinity for substrates and increases the rate of nicotinate D-ribonucleotide production. Dephosphorylation regenerates the low-affinity form of the enzyme, leading to product release.

The enzyme catalyses nicotinate + 5-phospho-alpha-D-ribose 1-diphosphate + ATP + H2O = nicotinate beta-D-ribonucleotide + ADP + phosphate + diphosphate. Its pathway is cofactor biosynthesis; NAD(+) biosynthesis; nicotinate D-ribonucleotide from nicotinate: step 1/1. Catalyzes the synthesis of beta-nicotinate D-ribonucleotide from nicotinate and 5-phospho-D-ribose 1-phosphate at the expense of ATP. The polypeptide is Nicotinate phosphoribosyltransferase (Escherichia coli O7:K1 (strain IAI39 / ExPEC)).